A 432-amino-acid polypeptide reads, in one-letter code: MIKIRRLSSVDDHFQAELDQLLSFEVSVDSEIERTVTQILHQIRTHGDRALLELTRQFDNPDIDRIEEIELPRDEWQSALMSLDKVQREALEQAASRIRAYHEKQLAQSWDYVELDGTRLGQKITALDRVGLYVPGGKAAYPSSVLMNAIPARVAGVRELIMVTPTPKGEKNPLVLAAAAICEVDRVFTIGGAQAVAALAYGTTTVPKVDKIVGPGNAYVAAAKRHVFGTVGIDMLAGPSEILVICDGKTNPDWIAMDLFSQAEHDEQAQSILLCPDKAFLDRVADSISRLIDTLPRRDVIRSSLENRGALIHVRDLEEACMIANRIAPEHLELSVDEPEQWVDSIRHAGAIFLGRYTCEALGDYCAGPNHVLPTSGTARFSSPLGVYDFQKRTSLIQVSAAGASRLGETASILAKGEGLDAHARSAESRYQ.

Tyr-133, Gln-194, and Asn-217 together coordinate NAD(+). Ser-240, Gln-262, and His-265 together coordinate substrate. Positions 262 and 265 each coordinate Zn(2+). Active-site proton acceptor residues include Glu-330 and His-331. Residues His-331, Asp-364, Glu-418, and His-423 each contribute to the substrate site. Zn(2+) is bound at residue Asp-364. His-423 serves as a coordination point for Zn(2+).

This sequence belongs to the histidinol dehydrogenase family. The cofactor is Zn(2+).

It catalyses the reaction L-histidinol + 2 NAD(+) + H2O = L-histidine + 2 NADH + 3 H(+). The protein operates within amino-acid biosynthesis; L-histidine biosynthesis; L-histidine from 5-phospho-alpha-D-ribose 1-diphosphate: step 9/9. Its function is as follows. Catalyzes the sequential NAD-dependent oxidations of L-histidinol to L-histidinaldehyde and then to L-histidine. The protein is Histidinol dehydrogenase of Nitrosomonas europaea (strain ATCC 19718 / CIP 103999 / KCTC 2705 / NBRC 14298).